Reading from the N-terminus, the 615-residue chain is RNA polymerase sigma factor RpoD (615 aa).

The interval 177-215 (APTATHVGSELSQEDLDDDEDEDEEDGDDDAADDDNSID) is disordered. The segment covering 188–214 (SQEDLDDDEDEDEEDGDDDAADDDNSI) has biased composition (acidic residues). Residues 381 to 451 (MVEANLRLVI…TRSIADQART (71 aa)) form a sigma-70 factor domain-2 region. The short motif at 405–408 (DLIQ) is the Interaction with polymerase core subunit RpoC element. Residues 460-536 (ETINKLNRIS…DTTLELPLDS (77 aa)) are sigma-70 factor domain-3. The sigma-70 factor domain-4 stretch occupies residues 549–602 (VLAGLTAREAKVLRMRFGIDMNTDHTLEEVGKQFDVTRERIRQIEAKALRKLRH). A DNA-binding region (H-T-H motif) is located at residues 575-594 (LEEVGKQFDVTRERIRQIEA).

This sequence belongs to the sigma-70 factor family. RpoD/SigA subfamily. Interacts transiently with the RNA polymerase catalytic core.

The protein resides in the cytoplasm. Sigma factors are initiation factors that promote the attachment of RNA polymerase to specific initiation sites and are then released. This sigma factor is the primary sigma factor during exponential growth. The protein is RNA polymerase sigma factor RpoD of Salmonella typhi.